Reading from the N-terminus, the 133-residue chain is Large ribosomal subunit protein bL20 (133 aa).

Belongs to the bacterial ribosomal protein bL20 family.

Binds directly to 23S ribosomal RNA and is necessary for the in vitro assembly process of the 50S ribosomal subunit. It is not involved in the protein synthesizing functions of that subunit. The chain is Large ribosomal subunit protein bL20 from Bartonella bacilliformis (strain ATCC 35685 / KC583 / Herrer 020/F12,63).